The primary structure comprises 476 residues: Glycogen synthase (476 aa).

Position 15 (lysine 15) interacts with ADP-alpha-D-glucose.

Belongs to the glycosyltransferase 1 family. Bacterial/plant glycogen synthase subfamily.

The enzyme catalyses [(1-&gt;4)-alpha-D-glucosyl](n) + ADP-alpha-D-glucose = [(1-&gt;4)-alpha-D-glucosyl](n+1) + ADP + H(+). The protein operates within glycan biosynthesis; glycogen biosynthesis. Its function is as follows. Synthesizes alpha-1,4-glucan chains using ADP-glucose. This chain is Glycogen synthase, found in Bacillus cereus (strain Q1).